The following is a 72-amino-acid chain: Protein P13 (72 aa).

Its subcellular location is the virion membrane. The chain is Protein P13 (P13) from Pseudomonas phage phi6 (Bacteriophage phi-6).